A 481-amino-acid polypeptide reads, in one-letter code: Trichosetin biosynthesis cluster MFS transporter (481 aa).

Positions 1-13 are enriched in polar residues; it reads MSTTPQMSQSGFQ. Residues 1-63 are disordered; sequence MSTTPQMSQS…DGPDDPQHPL (63 aa). The span at 20–31 shows a compositional bias: basic and acidic residues; it reads GAREDVGTEAQE. N-linked (GlcNAc...) asparagine glycosylation is present at Asn-64. A helical transmembrane segment spans residues 72 to 92; sequence LHVGIVSLSTLAANLAATMFA. N-linked (GlcNAc...) asparagine glycosylation is present at Asn-103. Helical transmembrane passes span 111-131, 147-167, 169-189, 200-220, and 228-248; these read AMTVSLYVLGFALGPLLLAPL, VYMAFTIGCAFSTNVAMFLVF, IIAGCAASGPMSIGGGTVADL, ALFAVGPLLGPVIGPIIGGFV, and WTFRILLILSGILATVTFALM. An N-linked (GlcNAc...) asparagine glycan is attached at Asn-252. 5 helical membrane-spanning segments follow: residues 302-322, 353-373, 380-400, 403-423, and 446-466; these read PIVLLVSLYTGILFGLIFLLF, LLLMKWLGPITPLGLFIYGWT, WIVPIIGTFIVGFGSLFVVIP, IYLVDAFGAEAAASAMAANLL, and GWGNSVLGFITLAFTPVPWIF.

The protein belongs to the major facilitator superfamily.

Its subcellular location is the cell membrane. In terms of biological role, efflux pump required for efficient secretion of trichosetin or other secondary metabolies produced by the trichosetin gene cluster. Plays a crucial role in detoxification of the toxic trichosetin in Gibberella fujikuroi cells. This Gibberella fujikuroi (strain CBS 195.34 / IMI 58289 / NRRL A-6831) (Bakanae and foot rot disease fungus) protein is Trichosetin biosynthesis cluster MFS transporter.